The chain runs to 624 residues: Phosphomethylpyrimidine synthase (624 aa).

A disordered region spans residues 48–70 (SDTHTSQGREKNPPLTVYDTSGP). Residues asparagine 229, methionine 258, tyrosine 287, histidine 323, 343-345 (SRG), 384-387 (DGLR), and glutamate 423 each bind substrate. Residue histidine 427 participates in Zn(2+) binding. Substrate is bound at residue tyrosine 450. Residue histidine 491 participates in Zn(2+) binding. The [4Fe-4S] cluster site is built by cysteine 571, cysteine 574, and cysteine 579.

Belongs to the ThiC family. As to quaternary structure, homodimer. [4Fe-4S] cluster serves as cofactor.

The enzyme catalyses 5-amino-1-(5-phospho-beta-D-ribosyl)imidazole + S-adenosyl-L-methionine = 4-amino-2-methyl-5-(phosphooxymethyl)pyrimidine + CO + 5'-deoxyadenosine + formate + L-methionine + 3 H(+). It functions in the pathway cofactor biosynthesis; thiamine diphosphate biosynthesis. In terms of biological role, catalyzes the synthesis of the hydroxymethylpyrimidine phosphate (HMP-P) moiety of thiamine from aminoimidazole ribotide (AIR) in a radical S-adenosyl-L-methionine (SAM)-dependent reaction. The chain is Phosphomethylpyrimidine synthase from Nitrosococcus oceani (strain ATCC 19707 / BCRC 17464 / JCM 30415 / NCIMB 11848 / C-107).